The primary structure comprises 299 residues: Sulfate adenylyltransferase subunit 2 (299 aa).

It belongs to the PAPS reductase family. CysD subfamily. In terms of assembly, heterodimer composed of CysD, the smaller subunit, and CysN.

The catalysed reaction is sulfate + ATP + H(+) = adenosine 5'-phosphosulfate + diphosphate. It functions in the pathway sulfur metabolism; hydrogen sulfide biosynthesis; sulfite from sulfate: step 1/3. Its function is as follows. With CysN forms the ATP sulfurylase (ATPS) that catalyzes the adenylation of sulfate producing adenosine 5'-phosphosulfate (APS) and diphosphate, the first enzymatic step in sulfur assimilation pathway. APS synthesis involves the formation of a high-energy phosphoric-sulfuric acid anhydride bond driven by GTP hydrolysis by CysN coupled to ATP hydrolysis by CysD. The sequence is that of Sulfate adenylyltransferase subunit 2 from Colwellia psychrerythraea (strain 34H / ATCC BAA-681) (Vibrio psychroerythus).